A 156-amino-acid chain; its full sequence is MLQPEGLYALEEGTALTASRNDCIICYSAYDLSVHLPRRLYCGHTFCQACMQRLDMPAHEQHWIPCPQCRQSTPVPRGGVTMLDLDLAAFLAVKAEREPSKIEPRSSVPLKISTTITQQPAGLYPTLGPQPHFPQPGCCCWGWGRLCWYPPGNPEV.

The segment at 23-70 adopts an RING-type zinc-finger fold; it reads CIICYSAYDLSVHLPRRLYCGHTFCQACMQRLDMPAHEQHWIPCPQCR.

This chain is RING finger protein 224 (Rnf224), found in Mus musculus (Mouse).